Here is a 135-residue protein sequence, read N- to C-terminus: Holo-[acyl-carrier-protein] synthase (135 aa).

Mg(2+) contacts are provided by D8 and E57.

This sequence belongs to the P-Pant transferase superfamily. AcpS family. Mg(2+) serves as cofactor.

It localises to the cytoplasm. The enzyme catalyses apo-[ACP] + CoA = holo-[ACP] + adenosine 3',5'-bisphosphate + H(+). In terms of biological role, transfers the 4'-phosphopantetheine moiety from coenzyme A to a Ser of acyl-carrier-protein. This chain is Holo-[acyl-carrier-protein] synthase, found in Xanthobacter autotrophicus (strain ATCC BAA-1158 / Py2).